A 242-amino-acid polypeptide reads, in one-letter code: Probable transcriptional regulatory protein LSL_0422 (242 aa).

Residues Met1–Arg21 form a disordered region.

Belongs to the TACO1 family.

It is found in the cytoplasm. This chain is Probable transcriptional regulatory protein LSL_0422, found in Ligilactobacillus salivarius (strain UCC118) (Lactobacillus salivarius).